Reading from the N-terminus, the 878-residue chain is Phosphoenolpyruvate carboxylase (878 aa).

Active-site residues include His140 and Lys545.

It belongs to the PEPCase type 1 family. Requires Mg(2+) as cofactor.

The enzyme catalyses oxaloacetate + phosphate = phosphoenolpyruvate + hydrogencarbonate. Its function is as follows. Forms oxaloacetate, a four-carbon dicarboxylic acid source for the tricarboxylic acid cycle. This is Phosphoenolpyruvate carboxylase from Pseudomonas paraeruginosa (strain DSM 24068 / PA7) (Pseudomonas aeruginosa (strain PA7)).